Reading from the N-terminus, the 78-residue chain is Large ribosomal subunit protein bL28 (78 aa).

The protein belongs to the bacterial ribosomal protein bL28 family.

This is Large ribosomal subunit protein bL28 from Thioalkalivibrio sulfidiphilus (strain HL-EbGR7).